The sequence spans 155 residues: Anaerobic ribonucleoside-triphosphate reductase-activating protein (155 aa).

[4Fe-4S] cluster contacts are provided by C26, C30, and C33. Residues 32–34 and G74 contribute to the S-adenosyl-L-methionine site; that span reads GCY.

The protein belongs to the organic radical-activating enzymes family. In terms of assembly, forms a tetramer composed of two NrdD and two NrdG subunits. [4Fe-4S] cluster is required as a cofactor.

It is found in the cytoplasm. It carries out the reaction glycyl-[protein] + reduced [flavodoxin] + S-adenosyl-L-methionine = glycin-2-yl radical-[protein] + semiquinone [flavodoxin] + 5'-deoxyadenosine + L-methionine + H(+). Activation of anaerobic ribonucleoside-triphosphate reductase under anaerobic conditions by generation of an organic free radical, using S-adenosylmethionine and reduced flavodoxin as cosubstrates to produce 5'-deoxy-adenosine. This Vibrio cholerae serotype O1 (strain ATCC 39315 / El Tor Inaba N16961) protein is Anaerobic ribonucleoside-triphosphate reductase-activating protein (nrdG).